Reading from the N-terminus, the 849-residue chain is Rho guanine nucleotide exchange factor 15 (849 aa).

Disordered stretches follow at residues 1-146 (MSAQ…ASAP), 159-202 (GAEG…NGTP), and 277-308 (LPPL…LPSE). A compositionally biased stretch (basic residues) spans 18–31 (RIIRPRPPSRHRAP). The segment covering 48–59 (QISNDASASVCT) has biased composition (polar residues). Low complexity predominate over residues 65 to 110 (PPTASLKPPALLPPSVSRTSLDSQTSPDSPSSTPSPSPVSRRSISP). Residues Ser107 and Ser109 each carry the phosphoserine modification. Residues 111–123 (EPAPCSPVPPPKP) show a composition bias toward pro residues. Residues 164–180 (AQSSDSLERCSQGSTEV) are compositionally biased toward polar residues. Phosphotyrosine; by EPHB2 is present on Tyr361. The 185-residue stretch at 425-609 (RMQESLFEVV…SKIIERCSAE (185 aa)) folds into the DH domain. 2 stretches are compositionally biased toward polar residues: residues 771–786 (CSEP…QSLE) and 840–849 (SSGTPDTPQP). 2 disordered regions span residues 771 to 803 (CSEP…GWLK) and 819 to 849 (GEHE…TPQP).

In terms of assembly, interacts with EPHA4. Interacts with EPHB2. In terms of processing, phosphorylated on tyrosine residues upon EFNA1 stimulation. EPHB2-dependent phosphorylation at Tyr-361 triggers UBE3A-mediated ubiquitination. Ubiquitinated; UBE3A-mediated ubiquitination and degradation by the proteasome promotes EFNB1-dependent synapse formation. At P12, expressed is detected in the CA1 region and the dentate gyrus of the hippocampus.

The protein localises to the cell projection. Its subcellular location is the dendrite. In terms of biological role, specific GEF for RhoA activation. Does not activate RAC1 or CDC42. Regulates vascular smooth muscle contractility. Negatively regulates excitatory synapse development by suppressing the synapse-promoting activity of EPHB2. This chain is Rho guanine nucleotide exchange factor 15 (Arhgef15), found in Mus musculus (Mouse).